The chain runs to 1484 residues: Cystic fibrosis transmembrane conductance regulator (1484 aa).

Topologically, residues 1–77 (MQRSPLERAN…KLINALRRCF (77 aa)) are cytoplasmic. Residues 78–98 (FWRFMFYGLLLYLGEVTKAVQ) form a helical membrane-spanning segment. An ABC transmembrane type-1 1 domain is found at 81-365 (FMFYGLLLYL…WAVQMWYDSI (285 aa)). The Extracellular segment spans residues 99-122 (PLLLGRIIASYDPDNAHERSIAYY). Residues 123–146 (LGIGLCLLFIVRTLLLHPAVFGLH) traverse the membrane as a helical segment. Over 147 to 195 (HIGMQMRIALFSLIYKKTLKLSSRVLDKISTGQLVSLLSNNLNKFDEGL) the chain is Cytoplasmic. The chain crosses the membrane as a helical span at residues 196–216 (ALAHFVWIAPLQVMLLMGLLW). Residues 217–222 (DLLQAS) lie on the Extracellular side of the membrane. The chain crosses the membrane as a helical span at residues 223-243 (AFCGLAVLVVLVLFQAWLGHR). Over 244–298 (MMKYRDRRAGKINERLVITAEIIENIQSVKAYCWEEAMENMIESLRETELKLTRK) the chain is Cytoplasmic. Residues 299 to 319 (AAYMRYFNSSAFFFSGFFVVF) form a helical membrane-spanning segment. At 320-339 (LSVLPSMLTKGIVLRKIFTT) the chain is on the extracellular side. Residues 340–358 (ISFCIVLRMAVTRQFPWAV) form a helical membrane-spanning segment. Over 359–859 (QMWYDSIGAI…YLRYMTIHKK (501 aa)) the chain is Cytoplasmic. ATP-binding positions include Trp401, Ser434, 458 to 465 (GSTGAGKT), and Gln493. Positions 423 to 646 (SDDKNLIFSN…RPDFSSKLMG (224 aa)) constitute an ABC transporter 1 domain. The S-palmitoyl cysteine moiety is linked to residue Cys524. Residues Ser549 and Ser660 each carry the phosphoserine modification. The interval 654-832 (SAERRNSILT…EEINEEDLKE (179 aa)) is disordered R region. Phosphoserine; by PKA is present on Ser670. Ser686 is modified (phosphoserine). Lys688 is covalently cross-linked (Glycyl lysine isopeptide (Lys-Gly) (interchain with G-Cter in ubiquitin)). 7 positions are modified to phosphoserine: Ser700, Ser712, Ser737, Ser768, Ser791, Ser796, and Ser814. Residues 860–880 (LIFVLMMCLVIFLIEVAASLV) form a helical membrane-spanning segment. The 300-residue stretch at 860–1159 (LIFVLMMCLV…AVNASIDVDS (300 aa)) folds into the ABC transmembrane type-1 2 domain. Residues 881 to 922 (GLCLFKDGASRMNSTSNLNHTSTLDWFAVIVTNTSTYYMFYI) are Extracellular-facing. Asn893, Asn899, and Asn913 each carry an N-linked (GlcNAc...) asparagine glycan. The chain crosses the membrane as a discontinuously helical span at residues 923 to 943 (YVGVADTLLALGFLRGLPLVH). The Cytoplasmic portion of the chain corresponds to 944–994 (SLISVSKILHQKMLHSVLQAPMSTFNTLKTGSILNRFSKDMAILDDLLPLT). The helical transmembrane segment at 995–1015 (IFDFIQLLLIVIGAVTVVSAL) threads the bilayer. The Extracellular portion of the chain corresponds to 1016–1017 (QP). A helical transmembrane segment spans residues 1018 to 1038 (YIFLASVPVVIAFVLLRAYFL). The Cytoplasmic portion of the chain corresponds to 1039 to 1099 (RTSQQLKQLE…TANWFLYLST (61 aa)). A helical membrane pass occupies residues 1100–1120 (LRWFQMRIEMVFVIFFILVTF). Residues 1121-1134 (ISILTTGDGEGKVG) are Extracellular-facing. The helical transmembrane segment at 1135–1155 (IVLTLAMNIMGTLQWAVNASI) threads the bilayer. The Cytoplasmic portion of the chain corresponds to 1156-1484 (DVDSLMRSVS…TEEEVQDTRL (329 aa)). Residues 1212–1445 (MTVQDLTAKY…KSVFKQAISH (234 aa)) form the ABC transporter 2 domain. ATP contacts are provided by residues Tyr1221 and 1246 to 1253 (GRTGSGKS). An interaction with GORASP2 region spans residues 1388-1484 (KTLKQAFTNC…TEEEVQDTRL (97 aa)). A lipid anchor (S-palmitoyl cysteine) is attached at Cys1397. Phosphoserine occurs at positions 1446 and 1460. Positions 1463–1484 (LSRPKITALQEETEEEVQDTRL) are disordered. Residues 1473–1484 (EETEEEVQDTRL) are compositionally biased toward acidic residues. Positions 1482-1484 (TRL) match the PDZ-binding motif.

Belongs to the ABC transporter superfamily. ABCC family. CFTR transporter (TC 3.A.1.202) subfamily. As to quaternary structure, monomer; does not require oligomerization for channel activity. May form oligomers in the membrane. Interacts with SLC26A3, SLC26A6 and NHERF1. Interacts with SHANK2. Interacts with MYO6. Interacts (via C-terminus) with GOPC (via PDZ domain); this promotes CFTR internalization and thereby decreases channel activity. Interacts with SLC4A7 through NHERF1. Found in a complex with MYO5B and RAB11A. Interacts with ANO1. Interacts with SLC26A8. Interacts with AHCYL1; the interaction increases CFTR activity. Interacts with CSE1L. The core-glycosylated form interacts with GORASP2 (via PDZ GRASP-type 1 domain) in respone to ER stress. Interacts with MARCHF2; the interaction leads to CFTR ubiqtuitination and degradation. Interacts with ADGRG2. N-glycosylated. Post-translationally, phosphorylated; cAMP treatment promotes phosphorylation and activates the channel. Dephosphorylation decreases the ATPase activity (in vitro). Phosphorylation at PKA sites activates the channel. Phosphorylation at PKC sites enhances the response to phosphorylation by PKA. Phosphorylated by AMPK; this inhibits channel activity. In terms of processing, ubiquitinated, leading to its degradation in the lysosome. Deubiquitination by USP10 in early endosomes enhances its endocytic recycling to the cell membrane. Ubiquitinated by RNF185 during ER stress. Ubiquitinated by MARCHF2.

Its subcellular location is the apical cell membrane. It localises to the early endosome membrane. The protein resides in the cell membrane. The protein localises to the recycling endosome membrane. It is found in the endoplasmic reticulum membrane. Its subcellular location is the nucleus. The enzyme catalyses ATP + H2O + closed Cl(-) channel = ADP + phosphate + open Cl(-) channel.. It carries out the reaction chloride(in) = chloride(out). The catalysed reaction is hydrogencarbonate(in) = hydrogencarbonate(out). It catalyses the reaction ATP + H2O = ADP + phosphate + H(+). In terms of biological role, epithelial ion channel that plays an important role in the regulation of epithelial ion and water transport and fluid homeostasis. Mediates the transport of chloride ions across the cell membrane. Possesses an intrinsic ATPase activity and utilizes ATP to gate its channel; the passive flow of anions through the channel is gated by cycles of ATP binding and hydrolysis by the ATP-binding domains. The ion channel is also permeable to HCO(3)(-); selectivity depends on the extracellular chloride concentration. Exerts its function also by modulating the activity of other ion channels and transporters. Contributes to the regulation of the pH and the ion content of the epithelial fluid layer. Modulates the activity of the epithelial sodium channel (ENaC) complex, in part by regulating the cell surface expression of the ENaC complex. May regulate bicarbonate secretion and salvage in epithelial cells by regulating the transporter SLC4A7. Can inhibit the chloride channel activity of ANO1. Plays a role in the chloride and bicarbonate homeostasis during sperm epididymal maturation and capacitation. The sequence is that of Cystic fibrosis transmembrane conductance regulator from Ornithorhynchus anatinus (Duckbill platypus).